Reading from the N-terminus, the 657-residue chain is Probable Xaa-Pro aminopeptidase P (657 aa).

4 residues coordinate Mn(2+): Asp453, Asp464, Glu562, and Glu576.

Belongs to the peptidase M24B family. Mn(2+) serves as cofactor.

The catalysed reaction is Release of any N-terminal amino acid, including proline, that is linked to proline, even from a dipeptide or tripeptide.. Its function is as follows. Catalyzes the removal of a penultimate prolyl residue from the N-termini of peptides. This is Probable Xaa-Pro aminopeptidase P (ampp) from Talaromyces stipitatus (strain ATCC 10500 / CBS 375.48 / QM 6759 / NRRL 1006) (Penicillium stipitatum).